Here is a 122-residue protein sequence, read N- to C-terminus: MIQPQTYLNVADNSGARKLMCIRILGGRQKQYGKIGDVIIAVVKDALPNMPLKKSEIVRAVIVRTRKGVNRNNGTSIRFDENAAVIINKEGNPRGTRIFGPVARELRERNFTKLVSLAPEVL.

Belongs to the universal ribosomal protein uL14 family. In terms of assembly, part of the 50S ribosomal subunit.

Its subcellular location is the plastid. It localises to the chloroplast. In terms of biological role, binds to 23S rRNA. This chain is Large ribosomal subunit protein uL14c, found in Pleurastrum terricola (Filamentous green alga).